The following is a 304-amino-acid chain: Homoserine kinase (304 aa).

86–96 (PLARGLGSSAA) is a binding site for ATP.

This sequence belongs to the GHMP kinase family. Homoserine kinase subfamily.

It is found in the cytoplasm. It catalyses the reaction L-homoserine + ATP = O-phospho-L-homoserine + ADP + H(+). Its pathway is amino-acid biosynthesis; L-threonine biosynthesis; L-threonine from L-aspartate: step 4/5. Catalyzes the ATP-dependent phosphorylation of L-homoserine to L-homoserine phosphate. The chain is Homoserine kinase from Carboxydothermus hydrogenoformans (strain ATCC BAA-161 / DSM 6008 / Z-2901).